Consider the following 238-residue polypeptide: Purine nucleoside phosphorylase DeoD-type (238 aa).

His4 is a binding site for a purine D-ribonucleoside. Phosphate contacts are provided by residues Gly20, Arg24, Arg43, and 87–90; that span reads RIGS. A purine D-ribonucleoside-binding positions include 181 to 183 and 205 to 206; these read EME and SD. Residue Asp206 is the Proton donor of the active site.

The protein belongs to the PNP/UDP phosphorylase family. Homohexamer; trimer of homodimers.

The enzyme catalyses a purine D-ribonucleoside + phosphate = a purine nucleobase + alpha-D-ribose 1-phosphate. It catalyses the reaction a purine 2'-deoxy-D-ribonucleoside + phosphate = a purine nucleobase + 2-deoxy-alpha-D-ribose 1-phosphate. Catalyzes the reversible phosphorolytic breakdown of the N-glycosidic bond in the beta-(deoxy)ribonucleoside molecules, with the formation of the corresponding free purine bases and pentose-1-phosphate. The chain is Purine nucleoside phosphorylase DeoD-type from Mycoplasma pneumoniae (strain ATCC 29342 / M129 / Subtype 1) (Mycoplasmoides pneumoniae).